We begin with the raw amino-acid sequence, 317 residues long: Glutathione synthetase (317 aa).

Residues 126-311 enclose the ATP-grasp domain; that stretch reads KFFATQFTQC…IGDKLMDAIA (186 aa). 152 to 208 provides a ligand contact to ATP; sequence AAEHRDIILKPLDGMGGSSIFRHREGDPNLSVILETLTQHGSQQIMAQRYLPEIKDG. 2 residues coordinate Mg(2+): Glu282 and Asn284.

The protein belongs to the prokaryotic GSH synthase family. Mg(2+) is required as a cofactor. Requires Mn(2+) as cofactor.

It carries out the reaction gamma-L-glutamyl-L-cysteine + glycine + ATP = glutathione + ADP + phosphate + H(+). The protein operates within sulfur metabolism; glutathione biosynthesis; glutathione from L-cysteine and L-glutamate: step 2/2. In Pseudomonas aeruginosa (strain ATCC 15692 / DSM 22644 / CIP 104116 / JCM 14847 / LMG 12228 / 1C / PRS 101 / PAO1), this protein is Glutathione synthetase.